The following is an 89-amino-acid chain: Small ribosomal subunit protein uS15 (89 aa).

Over residues 1–11 the composition is skewed to basic and acidic residues; it reads MSITAERKAEV. Positions 1-24 are disordered; that stretch reads MSITAERKAEVIKTSATKAGDTGS.

The protein belongs to the universal ribosomal protein uS15 family. As to quaternary structure, part of the 30S ribosomal subunit. Forms a bridge to the 50S subunit in the 70S ribosome, contacting the 23S rRNA.

Functionally, one of the primary rRNA binding proteins, it binds directly to 16S rRNA where it helps nucleate assembly of the platform of the 30S subunit by binding and bridging several RNA helices of the 16S rRNA. Forms an intersubunit bridge (bridge B4) with the 23S rRNA of the 50S subunit in the ribosome. This is Small ribosomal subunit protein uS15 from Rhodopseudomonas palustris (strain TIE-1).